We begin with the raw amino-acid sequence, 212 residues long: uncharacterized protein (212 aa).

3 residues coordinate S-adenosyl-L-methionine: G53, E74, and D97.

It belongs to the methyltransferase superfamily. YrrT family.

Functionally, could be a S-adenosyl-L-methionine-dependent methyltransferase. This is an uncharacterized protein from Bacillus cereus (strain ATCC 14579 / DSM 31 / CCUG 7414 / JCM 2152 / NBRC 15305 / NCIMB 9373 / NCTC 2599 / NRRL B-3711).